A 342-amino-acid polypeptide reads, in one-letter code: S-adenosylmethionine:tRNA ribosyltransferase-isomerase (342 aa).

It belongs to the QueA family. In terms of assembly, monomer.

The protein resides in the cytoplasm. The catalysed reaction is 7-aminomethyl-7-carbaguanosine(34) in tRNA + S-adenosyl-L-methionine = epoxyqueuosine(34) in tRNA + adenine + L-methionine + 2 H(+). The protein operates within tRNA modification; tRNA-queuosine biosynthesis. Transfers and isomerizes the ribose moiety from AdoMet to the 7-aminomethyl group of 7-deazaguanine (preQ1-tRNA) to give epoxyqueuosine (oQ-tRNA). This is S-adenosylmethionine:tRNA ribosyltransferase-isomerase from Streptococcus agalactiae serotype III (strain NEM316).